The following is a 159-amino-acid chain: Ribosomal RNA large subunit methyltransferase H (159 aa).

S-adenosyl-L-methionine-binding positions include Leu76, Gly108, and 127 to 132 (FGKLTM).

This sequence belongs to the RNA methyltransferase RlmH family. Homodimer.

It is found in the cytoplasm. It carries out the reaction pseudouridine(1915) in 23S rRNA + S-adenosyl-L-methionine = N(3)-methylpseudouridine(1915) in 23S rRNA + S-adenosyl-L-homocysteine + H(+). In terms of biological role, specifically methylates the pseudouridine at position 1915 (m3Psi1915) in 23S rRNA. The chain is Ribosomal RNA large subunit methyltransferase H from Lactobacillus delbrueckii subsp. bulgaricus (strain ATCC 11842 / DSM 20081 / BCRC 10696 / JCM 1002 / NBRC 13953 / NCIMB 11778 / NCTC 12712 / WDCM 00102 / Lb 14).